The following is a 193-amino-acid chain: Flagellar transcriptional regulator FlhC (193 aa).

4 residues coordinate Zn(2+): Cys-137, Cys-140, Cys-158, and Cys-161.

It belongs to the FlhC family. As to quaternary structure, heterohexamer composed of two FlhC and four FlhD subunits. Each FlhC binds a FlhD dimer, forming a heterotrimer, and a hexamer assembles by dimerization of two heterotrimers. Zn(2+) serves as cofactor.

Its subcellular location is the cytoplasm. Functions in complex with FlhD as a master transcriptional regulator that regulates transcription of several flagellar and non-flagellar operons by binding to their promoter region. Activates expression of class 2 flagellar genes, including fliA, which is a flagellum-specific sigma factor that turns on the class 3 genes. Also regulates genes whose products function in a variety of physiological pathways. The polypeptide is Flagellar transcriptional regulator FlhC (Pectobacterium carotovorum (Erwinia carotovora)).